Here is a 332-residue protein sequence, read N- to C-terminus: Ribosomal RNA-processing protein 8 (332 aa).

Positions 1–109 (MGKKRINEVS…EVEKKNEEGD (109 aa)) are disordered. Basic residues-rich tracts occupy residues 38–53 (KKKKRPWRNKVRKLAA) and 82–94 (KKKKKRGPKKKKY). Positions 95–109 (KPEAAEVEKKNEEGD) are enriched in basic and acidic residues. 6 residues coordinate S-adenosyl-L-methionine: His158, Gly193, Asp213, Asp225, Met226, and Cys242.

The protein belongs to the methyltransferase superfamily. RRP8 family.

Its subcellular location is the nucleus. It is found in the nucleolus. Probable methyltransferase required to silence rDNA. This Caenorhabditis briggsae protein is Ribosomal RNA-processing protein 8 (rrp-8).